The chain runs to 460 residues: G-protein coupled receptor 22 (460 aa).

The Cytoplasmic segment spans residues 1 to 74 (MESMPSSLTH…YPVSFQVSLT (74 aa)). A helical membrane pass occupies residues 75 to 95 (GFLMLEIVLGLSSNLTVLALY). Residues 96-114 (CMKSNLVSSVSNIVTMNLH) lie on the Extracellular side of the membrane. The chain crosses the membrane as a helical span at residues 115-135 (VLDVLVCVGCIPLTIVVVLLP). The Cytoplasmic portion of the chain corresponds to 136-144 (LEGNNALIC). The chain crosses the membrane as a helical span at residues 145–165 (CFHEACVSFASVATAANVLAI). The Extracellular segment spans residues 166-185 (TLDRYDISVRPANRVLTMGR). A helical transmembrane segment spans residues 186 to 206 (AVALLGSIWALSFFSFLVPFI). The Cytoplasmic segment spans residues 207–235 (EEGFFSQAGNERNQTEAEEPSNEYYTELG). The helical transmembrane segment at 236 to 256 (LYYHLLAQIPIFFFTAVVMLV) threads the bilayer. Over 257 to 343 (TYYKILQALN…ERQKRVFRMS (87 aa)) the chain is Extracellular. Basic residues predominate over residues 276-286 (VPKKKPRKKKT). The interval 276 to 309 (VPKKKPRKKKTISMTSTQPESTDASQSSAGRNAP) is disordered. The segment covering 287–305 (ISMTSTQPESTDASQSSAG) has biased composition (polar residues). The chain crosses the membrane as a helical span at residues 344–364 (LLIISTFLLCWTPITVLNTVI). Residues 365–377 (LSVGPSNFTVRLR) lie on the Cytoplasmic side of the membrane. The chain crosses the membrane as a helical span at residues 378-398 (LGFLVMAYGTTIFHPLLYAFT). Residues 399-460 (RQKFQKVLKS…QKCLSSEDVE (62 aa)) are Extracellular-facing.

The protein belongs to the G-protein coupled receptor 1 family.

Its subcellular location is the cell membrane. Functionally, orphan G-protein coupled receptor that regulates cilia length and structure in the Kupffer's vesicle leading to the left-right asymmetry development by establishing a directional fluid flow. The sequence is that of G-protein coupled receptor 22 (gpr22a) from Danio rerio (Zebrafish).